Consider the following 273-residue polypeptide: Diphthine methyl ester synthase (273 aa).

S-adenosyl-L-methionine contacts are provided by residues L10, D87, G90, 115–116 (SI), L166, V224, and H249.

It belongs to the diphthine synthase family.

It carries out the reaction 2-[(3S)-amino-3-carboxypropyl]-L-histidyl-[translation elongation factor 2] + 4 S-adenosyl-L-methionine = diphthine methyl ester-[translation elongation factor 2] + 4 S-adenosyl-L-homocysteine + 3 H(+). It participates in protein modification; peptidyl-diphthamide biosynthesis. S-adenosyl-L-methionine-dependent methyltransferase that catalyzes four methylations of the modified target histidine residue in translation elongation factor 2 (EF-2), to form an intermediate called diphthine methyl ester. The four successive methylation reactions represent the second step of diphthamide biosynthesis. The chain is Diphthine methyl ester synthase (dph5) from Dictyostelium discoideum (Social amoeba).